Consider the following 116-residue polypeptide: Antimicrobial peptide 1b (116 aa).

Positions 1 to 34 (MKPHMSATVLRAPRVAAILLAVVLAAVLATAVNG) are cleaved as a signal peptide. Residues 35–77 (AQRCGDQARGAKCPNCLCCGKYGFCGSGDAYCGAGSCQSQCRG) enclose the Chitin-binding type-1 domain. 5 disulfide bridges follow: C38-C53, C47-C59, C50-C78, C52-C66, and C71-C75. Positions 80-116 (DDVVGQALPAEPGSTRATAASSASARGLNLTATTGGP) are excised as a propeptide. The segment at 89 to 116 (AEPGSTRATAASSASARGLNLTATTGGP) is disordered. The span at 93-105 (STRATAASSASAR) shows a compositional bias: low complexity.

In terms of biological role, binds chitin. Has antifungal activity against the fungi F.solani (IC(50)=5 ug/ml), F.verticillioides (IC(50)=30 ug/ml), F.oxysporum (IC(50)=5 ug/ml), B.sorokiniana (IC(50)=5 ug/ml), B.cinerea (IC(50)=20 ug/ml) and N.crassa (IC(50)=10 ug/ml). Inhibits hyphal elongation and causes browning of hyphae in F.oxysporum. Causes destruction and discoloration of spores in B.sorokiniana. Inhibits the development of disease caused by the fungus P.infestans on potato tubers. Has antibacterial activity against the Gram-negative bacteria P.syringae and E.carotovora, and the Gram-positive bacterium C.michiganensis. Functionally, has antifungal activity against F.verticillioides (IC(50)=2.7 ug/ml). At concentrations between 45 uM and 225 uM, inhibits activity of metalloproteinase fungalysin Fv-cpm from F.verticillioides. The chain is Antimicrobial peptide 1b from Triticum kiharae (Wheat).